Reading from the N-terminus, the 291-residue chain is Prepilin leader peptidase/N-methyltransferase (291 aa).

The chain crosses the membrane as a helical span at residues 14–34 (LYFSLVFLFSLMIGSFLNVVI). Zn(2+) is bound by residues Cys-75, Cys-78, Cys-100, and Cys-103. A run of 6 helical transmembrane segments spans residues 107 to 127 (ISARYPLVELLTALLSVVVAM), 131 to 151 (PGWGTLAALLLTWVLVALTFI), 162 to 182 (LTLPLLWGGLLFNLLGGYVPL), 186 to 206 (VIGAMAGYLVLWSLYWAFKLL), 232 to 252 (LPIVLLLSSLVGAIFGIGLIL), and 262 to 282 (IPFGPYLAIAGWIALLWGDSI).

The protein belongs to the peptidase A24 family. Zn(2+) serves as cofactor.

The protein localises to the cell inner membrane. The enzyme catalyses Typically cleaves a -Gly-|-Phe- bond to release an N-terminal, basic peptide of 5-8 residues from type IV prepilin, and then N-methylates the new N-terminal amino group, the methyl donor being S-adenosyl-L-methionine.. Its function is as follows. Plays an essential role in type IV pili and type II pseudopili formation by proteolytically removing the leader sequence from substrate proteins and subsequently monomethylating the alpha-amino group of the newly exposed N-terminal phenylalanine. This is Prepilin leader peptidase/N-methyltransferase (tapD) from Aeromonas salmonicida (strain A449).